Reading from the N-terminus, the 422-residue chain is Metallocarboxypeptidase A (422 aa).

An N-terminal signal peptide occupies residues 1–17 (MRSVLSFALLAANVVSA). Residues 18-112 (AVLAPFDYSG…FEAYSAGYAP (95 aa)) constitute a propeptide, activation peptide. The Peptidase M14 domain maps to 119–419 (SYHSYQDHLS…AGTVAMLKAV (301 aa)). Positions 179 and 182 each coordinate Zn(2+). Residues 179 to 182 (HARE), Arg-237, and 254 to 255 (NR) contribute to the substrate site. A disulfide bridge connects residues Cys-248 and Cys-271. His-309 serves as a coordination point for Zn(2+). Position 310 to 311 (310 to 311 (SY)) interacts with substrate. Glu-385 functions as the Proton donor/acceptor in the catalytic mechanism.

This sequence belongs to the peptidase M14 family. The cofactor is Zn(2+).

The protein localises to the secreted. Its function is as follows. Extracellular metalloprotease that contributes to pathogenicity. The protein is Metallocarboxypeptidase A (MCPA) of Arthroderma otae (strain ATCC MYA-4605 / CBS 113480) (Microsporum canis).